Here is a 602-residue protein sequence, read N- to C-terminus: UvrABC system protein C (602 aa).

The GIY-YIG domain occupies Thr17–Ile94. In terms of domain architecture, UVR spans Ser199–Ile234.

The protein belongs to the UvrC family. Interacts with UvrB in an incision complex.

The protein resides in the cytoplasm. The UvrABC repair system catalyzes the recognition and processing of DNA lesions. UvrC both incises the 5' and 3' sides of the lesion. The N-terminal half is responsible for the 3' incision and the C-terminal half is responsible for the 5' incision. The chain is UvrABC system protein C from Borrelia hermsii (strain HS1 / DAH).